The sequence spans 209 residues: ATP-dependent Clp protease proteolytic subunit 2 (209 aa).

Residue S106 is the Nucleophile of the active site. H131 is an active-site residue.

This sequence belongs to the peptidase S14 family. Fourteen ClpP subunits assemble into 2 heptameric rings which stack back to back to give a disk-like structure with a central cavity, resembling the structure of eukaryotic proteasomes.

It localises to the cytoplasm. It catalyses the reaction Hydrolysis of proteins to small peptides in the presence of ATP and magnesium. alpha-casein is the usual test substrate. In the absence of ATP, only oligopeptides shorter than five residues are hydrolyzed (such as succinyl-Leu-Tyr-|-NHMec, and Leu-Tyr-Leu-|-Tyr-Trp, in which cleavage of the -Tyr-|-Leu- and -Tyr-|-Trp bonds also occurs).. Its function is as follows. Cleaves peptides in various proteins in a process that requires ATP hydrolysis. Has a chymotrypsin-like activity. Plays a major role in the degradation of misfolded proteins. This is ATP-dependent Clp protease proteolytic subunit 2 from Rhizobium etli (strain ATCC 51251 / DSM 11541 / JCM 21823 / NBRC 15573 / CFN 42).